The primary structure comprises 101 residues: Small ribosomal subunit protein uS14 (101 aa).

This sequence belongs to the universal ribosomal protein uS14 family. Part of the 30S ribosomal subunit. Contacts proteins S3 and S10.

Functionally, binds 16S rRNA, required for the assembly of 30S particles and may also be responsible for determining the conformation of the 16S rRNA at the A site. The sequence is that of Small ribosomal subunit protein uS14 from Rhizobium johnstonii (strain DSM 114642 / LMG 32736 / 3841) (Rhizobium leguminosarum bv. viciae).